The primary structure comprises 796 residues: MEEEASRSAAATNPGSRLTRWPPPDKREGSAVDPGKRRSLAATPSSSLPCTLIALGLRHEKEANELMEDLFETFQDEMGFSNMEDDGPEEEERVAEPQANFNTPQALRFEELLANLLNEQHQIAKELFEQLKMKKPSAKQQKEVEKVKPQCKEVHQTLILDPAQRKRLQQQMQQHVQLLTQIHLLATCNPNLNPEASSTRICLKELGTFAQSSIALHHQYNPKFQTLFQPCNLMGAMQLIEDFSTHVSIDCSPHKTVKKTANEFPCLPKQVAWILATSKVFMYPELLPVCSLKAKNPQDKILFTKAEDNKYLLTCKTARQLTVRIKNLNMNRAPDNIIKFYKKTKQLPVLGKCCEEIQPHQWKPPIEREEHRLPFWLKASLPSIQEELRHMADGAREVGNMTGTTEINSDQGLEKDNSELGSETRYPLLLPKGVVLKLKPVADRFPKKAWRQKRSSVLKPLLIQPSPSLQPSFNPGKTPAQSTHSEAPPSKMVLRIPHPIQPATVLQTVPGVPPLGVSGGESFESPAALPAMPPEARTSFPLSESQTLLSSAPVPKVMMPSPASSMFRKPYVRRRPSKRRGARAFRCIKPAPVIHPASVIFTVPATTVKIVSLGGGCNMIQPVNAAVAQSPQTIPIATLLVNPTSFPCPLNQPLVASSVSPLIVSGNSVNLPIPSTPEDKAHMNVDIACAVADGENAFQGLEPKLEPQELSPLSATVFPKVEHSPGPPPVDKQCQEGLSENSAYRWTVVKTEEGRQALEPLPQGIQESLNNSSPGDLEEVVKMEPEDATEEISGFL.

Disordered regions lie at residues 1-45 (MEEE…ATPS) and 463-488 (IQPS…SEAP). Residues 23-36 (PPDKREGSAVDPGK) show a composition bias toward basic and acidic residues. Residues 463–472 (IQPSPSLQPS) show a composition bias toward low complexity. Over residues 473–485 (FNPGKTPAQSTHS) the composition is skewed to polar residues. Residue Ser724 is modified to Phosphoserine. Residues 755-776 (RQALEPLPQGIQESLNNSSPGD) form a disordered region. The span at 765-774 (IQESLNNSSP) shows a compositional bias: polar residues.

As to quaternary structure, interacts with YY1. Interacts with MAD2L2. Interacts with INO80. Ubiquitous. Detected in small intestine, skeletal muscle, lung, pancreas, brain, stomach, spleen, colon and heart. Detected at very low levels in healthy liver. Highly expressed in most liver carcinomas.

The protein localises to the cytoplasm. Its subcellular location is the nucleus. The protein resides in the nucleoplasm. It is found in the nucleolus. Functionally, associates with the INO80 chromatin remodeling complex, which is responsible for transcriptional regulation, DNA repair, and replication. Enhances transcription activation by YY1. Plays a role in cell cycle regulation. This Homo sapiens (Human) protein is YY1-associated protein 1.